We begin with the raw amino-acid sequence, 410 residues long: MSAPSRITAALRSDAVGGSLLIGAAVIALIWANSPLSHSYEALRSFTFGPSALHLNLSVETWAADGLLAVFFFIVGNELKQELVHGELRDPRRAALPIAAALGGVAVPALVFLAFTLGSGGEAAGGWGIPMATGIAFAVAVLAVVGRHLPTPLRTFLLTLATVDDMSAVLVIAVACTSGINFTALALAAVGLAVFGYLQNGSGRAVARVRAMVPAWLLFVPLAAVVWALMHACGVHATIAGVVMGLLMRTRPQGAERVSPSHRAEEVLRPFSAGIALPLFALMSAGVSLAGAGGFVTSAITWNVLAGLLVGKVVGIFGGTWPTSRLTSAHLNPLLGWADIAGIAVLGGIGFTVSLPIAELSSTSQAHLTDAKGAILLASTTAALLAALLLGRRSRHHQRLARQAAQQATT.

A run of 11 helical transmembrane segments spans residues 16–36 (VGGS…NSPL), 55–75 (LNLS…FFIV), 95–115 (ALPI…FLAF), 125–145 (GGWG…LAVV), 156–176 (FLLT…AVAC), 178–198 (SGIN…FGYL), 215–235 (AWLL…ACGV), 275–295 (IALP…AGGF), 299–319 (AITW…IFGG), 340–360 (IAGI…IAEL), and 371–391 (AKGA…LLLG).

The protein belongs to the NhaA Na(+)/H(+) (TC 2.A.33) antiporter family.

It is found in the cell membrane. The enzyme catalyses Na(+)(in) + 2 H(+)(out) = Na(+)(out) + 2 H(+)(in). Functionally, na(+)/H(+) antiporter that extrudes sodium in exchange for external protons. This chain is Na(+)/H(+) antiporter NhaA 1/4, found in Streptomyces coelicolor (strain ATCC BAA-471 / A3(2) / M145).